A 110-amino-acid polypeptide reads, in one-letter code: Phosphoribosyl-ATP pyrophosphatase (110 aa).

The protein belongs to the PRA-PH family.

It localises to the cytoplasm. It carries out the reaction 1-(5-phospho-beta-D-ribosyl)-ATP + H2O = 1-(5-phospho-beta-D-ribosyl)-5'-AMP + diphosphate + H(+). It participates in amino-acid biosynthesis; L-histidine biosynthesis; L-histidine from 5-phospho-alpha-D-ribose 1-diphosphate: step 2/9. The protein is Phosphoribosyl-ATP pyrophosphatase of Teredinibacter turnerae (strain ATCC 39867 / T7901).